The primary structure comprises 177 residues: Large ribosomal subunit protein uL6 (177 aa).

It belongs to the universal ribosomal protein uL6 family. In terms of assembly, part of the 50S ribosomal subunit.

Its function is as follows. This protein binds to the 23S rRNA, and is important in its secondary structure. It is located near the subunit interface in the base of the L7/L12 stalk, and near the tRNA binding site of the peptidyltransferase center. In Rickettsia felis (strain ATCC VR-1525 / URRWXCal2) (Rickettsia azadi), this protein is Large ribosomal subunit protein uL6.